A 2287-amino-acid polypeptide reads, in one-letter code: Protein Ycf2 (2287 aa).

ATP is bound at residue 1641 to 1648; it reads GSIGTGRS.

The protein belongs to the Ycf2 family.

It localises to the plastid. It is found in the chloroplast stroma. In terms of biological role, probable ATPase of unknown function. Its presence in a non-photosynthetic plant (Epifagus virginiana) and experiments in tobacco indicate that it has an essential function which is probably not related to photosynthesis. This chain is Protein Ycf2, found in Lepidium virginicum (Virginia pepperweed).